The chain runs to 722 residues: Bifunctional UDP-N-acetylglucosamine 2-epimerase/N-acetylmannosamine kinase (722 aa).

Residues Arg-19, Ser-23, Arg-113, His-220, and Asn-253 each coordinate UDP. The CMP-N-acetyl-beta-neuraminate site is built by Lys-259, Glu-271, Lys-280, and His-281. UDP contacts are provided by Val-282, Ser-301, Ser-302, Glu-307, and Arg-321. Positions 406-722 (TLSALAVDLG…VLDYTTRRIH (317 aa)) are N-acetylmannosamine kinase. Asp-413 serves as a coordination point for Mg(2+). Gly-416 lines the an N-acyl-D-mannosamine 6-phosphate pocket. Residues Thr-417, Asn-418, and Arg-420 each coordinate ADP. An N-acyl-D-mannosamine 6-phosphate contacts are provided by Gly-476, Arg-477, Thr-489, Asn-516, Asp-517, and Gly-545. 5 residues coordinate an N-acyl-D-mannosamine: Gly-476, Arg-477, Thr-489, Asn-516, and Asp-517. Asp-517 is a catalytic residue. The an N-acyl-D-mannosamine site is built by Glu-566 and His-569. His-569 contributes to the an N-acyl-D-mannosamine 6-phosphate binding site. Zn(2+) is bound by residues His-569, Cys-579, Cys-581, and Cys-586. Glu-588 is an an N-acyl-D-mannosamine 6-phosphate binding site. Glu-588 is an an N-acyl-D-mannosamine binding site.

The protein in the N-terminal section; belongs to the UDP-N-acetylglucosamine 2-epimerase family. It in the C-terminal section; belongs to the ROK (NagC/XylR) family. Homodimer. Homotetramer. Homohexamer. The hexameric form exhibits both enzyme activities, whereas the dimeric form only catalyzes the phosphorylation of N-acyl-D-mannosamine. In terms of processing, phosphorylated. Phosphorylation by PKC activates the UDP-N-acetylglucosamine 2-epimerase activity. As to expression, widely expressed. Highest expression in liver. Also found at high levels in lung, brain and kidney.

It localises to the cytoplasm. The protein resides in the cytosol. The catalysed reaction is UDP-N-acetyl-alpha-D-glucosamine + H2O = aldehydo-N-acetyl-D-mannosamine + UDP + H(+). It carries out the reaction an N-acyl-D-mannosamine + ATP = an N-acyl-D-mannosamine 6-phosphate + ADP + H(+). It functions in the pathway amino-sugar metabolism; N-acetylneuraminate biosynthesis. With respect to regulation, the UDP-N-acetylglucosamine 2-epimerase activity, in contrast to the N-acetylmannosamine kinase activity, exhibits allosteric regulation by cytidine monophosphate-N-acetylneuraminic acid (CMP-Neu5Ac), the end product of neuraminic acid biosynthesis. Moreover, the activity is contingent upon the oligomeric state of the enzyme. The monomeric form is inactive, while the dimeric form selectively catalyzes the phosphorylation of N-acetylmannosamine. The hexameric form, on the other hand, demonstrates full proficiency in both enzyme activities. Furthermore, the UDP-N-acetylglucosamine 2-epimerase activity is increased by PKC-mediated phosphorylation. In terms of biological role, bifunctional enzyme that possesses both UDP-N-acetylglucosamine 2-epimerase and N-acetylmannosamine kinase activities, and serves as the initiator of the biosynthetic pathway leading to the production of N-acetylneuraminic acid (NeuAc), a critical precursor in the synthesis of sialic acids. By catalyzing this pivotal and rate-limiting step in sialic acid biosynthesis, this enzyme assumes a pivotal role in governing the regulation of cell surface sialylation, playing a role in embryonic angiogenesis. Sialic acids represent a category of negatively charged sugars that reside on the surface of cells as terminal components of glycoconjugates and mediate important functions in various cellular processes, including cell adhesion, signal transduction, and cellular recognition. This is Bifunctional UDP-N-acetylglucosamine 2-epimerase/N-acetylmannosamine kinase from Mus musculus (Mouse).